The following is a 209-amino-acid chain: Non-structural protein 5 (209 aa).

Asp86 provides a ligand contact to Mg(2+).

Belongs to the rotavirus NSP5 family. Homodimer. Interacts with VP1. Interacts with VP2. Interacts with NSP2 and NSP6. Mg(2+) serves as cofactor. Post-translationally, O-glycosylated.

The protein localises to the host cytoplasm. Its function is as follows. Plays an essential role in the viral genome replication. Participates, together with NSP2, in the formation of viral factories (viroplasms) which are large inclusions in the host cytoplasm where replication intermediates are assembled and viral RNA replication takes place. Orchestrates the recruitment of viroplasmic proteins such as capsid proteins to these factories. The polypeptide is Non-structural protein 5 (Bos taurus (Bovine)).